A 393-amino-acid polypeptide reads, in one-letter code: uncharacterized protein (393 aa).

This sequence belongs to the Gfo/Idh/MocA family.

This is an uncharacterized protein from Bacillus subtilis (strain 168).